The chain runs to 160 residues: MHLVLLAIGTRMPAWVTEGFNEYQKRMPPDMRLTLEEIPMPKRGKGDAGSQIRAEADALRKRLETIVKKSPGAKTVALEVNGRALDTHALSRKLGELKDVGQDLVLLVGGPDGLCPELSASAHERWSLSNLTLPHPLVRVLLAEQLYRGWTLLTGHPYHR.

Residues Leu78, Gly109, and 128–133 (LSNLTL) contribute to the S-adenosyl-L-methionine site.

The protein belongs to the RNA methyltransferase RlmH family. Homodimer.

The protein resides in the cytoplasm. The catalysed reaction is pseudouridine(1915) in 23S rRNA + S-adenosyl-L-methionine = N(3)-methylpseudouridine(1915) in 23S rRNA + S-adenosyl-L-homocysteine + H(+). Specifically methylates the pseudouridine at position 1915 (m3Psi1915) in 23S rRNA. In Alcanivorax borkumensis (strain ATCC 700651 / DSM 11573 / NCIMB 13689 / SK2), this protein is Ribosomal RNA large subunit methyltransferase H.